We begin with the raw amino-acid sequence, 393 residues long: Mitogen-activated protein kinase SIPK (393 aa).

The segment covering 1 to 11 has biased composition (polar residues); that stretch reads MDGSGQQTDTM. The tract at residues 1-31 is disordered; sequence MDGSGQQTDTMMSDAGAEQPPPAPQPVAGMD. The region spanning 60-345 is the Protein kinase domain; sequence KPPILPIGKG…VEGALAHPYL (286 aa). ATP contacts are provided by residues 66-74 and K89; that span reads IGKGAYGIV. D186 acts as the Proton acceptor in catalysis. The TXY motif lies at 218–220; sequence TEY.

Belongs to the protein kinase superfamily. CMGC Ser/Thr protein kinase family. MAP kinase subfamily. As to quaternary structure, interacts with SIPKK.

The catalysed reaction is L-tyrosyl-[protein] + ATP = O-phospho-L-tyrosyl-[protein] + ADP + H(+). The enzyme catalyses L-seryl-[protein] + ATP = O-phospho-L-seryl-[protein] + ADP + H(+). It catalyses the reaction L-threonyl-[protein] + ATP = O-phospho-L-threonyl-[protein] + ADP + H(+). Activated by threonine and tyrosine phosphorylation. Functionally, phosphorylates myelin basic protein (MBP) in vitro. May be involved in disease resistance. The sequence is that of Mitogen-activated protein kinase SIPK from Nicotiana tabacum (Common tobacco).